Reading from the N-terminus, the 337-residue chain is Major outer membrane protein P.IB (337 aa).

The signal sequence occupies residues 1 to 19 (MKKSLIALTLAALPVAAMA).

Belongs to the Gram-negative porin family. Homotrimer.

Its subcellular location is the cell outer membrane. Its function is as follows. Serves as a slightly cation selective porin. The chain is Major outer membrane protein P.IB (por) from Neisseria lactamica.